The sequence spans 313 residues: Protein FixB (313 aa).

FAD is bound at residue 255 to 283 (LYLAVGISGQIQHMVGANASQTIFAINKD).

This sequence belongs to the ETF alpha-subunit/FixB family. As to quaternary structure, heterodimer of FixA and FixB.

It participates in amine and polyamine metabolism; carnitine metabolism. Functionally, required for anaerobic carnitine reduction. May bring reductant to CaiA. The chain is Protein FixB from Escherichia coli O17:K52:H18 (strain UMN026 / ExPEC).